The sequence spans 363 residues: Membrane-bound lytic murein transglycosylase C (363 aa).

An N-terminal signal peptide occupies residues 1-15 (MKKYIVFAIIPFLFA). The N-palmitoyl cysteine moiety is linked to residue C16. C16 is lipidated: S-diacylglycerol cysteine.

Belongs to the transglycosylase Slt family.

Its subcellular location is the cell outer membrane. The enzyme catalyses Exolytic cleavage of the (1-&gt;4)-beta-glycosidic linkage between N-acetylmuramic acid (MurNAc) and N-acetylglucosamine (GlcNAc) residues in peptidoglycan, from either the reducing or the non-reducing ends of the peptidoglycan chains, with concomitant formation of a 1,6-anhydrobond in the MurNAc residue.. In terms of biological role, murein-degrading enzyme. May play a role in recycling of muropeptides during cell elongation and/or cell division. The protein is Membrane-bound lytic murein transglycosylase C of Histophilus somni (strain 129Pt) (Haemophilus somnus).